A 515-amino-acid polypeptide reads, in one-letter code: 2-isopropylmalate synthase (515 aa).

A Pyruvate carboxyltransferase domain is found at 5 to 268 (LIIFDTTLRD…DLGIDTTQIV (264 aa)). Residues D14, H202, H204, and N239 each contribute to the Mn(2+) site. The tract at residues 396–515 (KFVSLAQRSE…NADKLNPQRA (120 aa)) is regulatory domain.

The protein belongs to the alpha-IPM synthase/homocitrate synthase family. LeuA type 1 subfamily. In terms of assembly, homodimer. It depends on Mn(2+) as a cofactor.

It localises to the cytoplasm. The enzyme catalyses 3-methyl-2-oxobutanoate + acetyl-CoA + H2O = (2S)-2-isopropylmalate + CoA + H(+). The protein operates within amino-acid biosynthesis; L-leucine biosynthesis; L-leucine from 3-methyl-2-oxobutanoate: step 1/4. Catalyzes the condensation of the acetyl group of acetyl-CoA with 3-methyl-2-oxobutanoate (2-ketoisovalerate) to form 3-carboxy-3-hydroxy-4-methylpentanoate (2-isopropylmalate). This is 2-isopropylmalate synthase from Burkholderia pseudomallei (strain 1106a).